A 304-amino-acid chain; its full sequence is MNNQDIYINLLNILSKEDIKVDEPMKKHISFRVGGPADILVRPRTEEQLKNVLKLVKEESIPYLIIGNGSNILIKDGGIRGVVIELADNFNSYEINDTRMTAQSGALLSVLGKALQKQELKGFEFASGIPGTLGGALAMNAGAYGGEMKDIVKSVRLMDMEGNIFELSNEQMEFGYRKSIISKNGYIALSAELELQEGNYDEIKSLMDDLATRRITKQPLNFASAGSTFKRPTGYFAGKLIEETGLRGLTLRGAQVSEKHCGFVVNQGEASAKDILDLIYVIKSAVYAKFGVMLEEEVKILGED.

One can recognise an FAD-binding PCMH-type domain in the interval 32–198 (RVGGPADILV…LSAELELQEG (167 aa)). Arg-177 is a catalytic residue. The active-site Proton donor is Ser-227. Residue Glu-297 is part of the active site.

It belongs to the MurB family. It depends on FAD as a cofactor.

It localises to the cytoplasm. The enzyme catalyses UDP-N-acetyl-alpha-D-muramate + NADP(+) = UDP-N-acetyl-3-O-(1-carboxyvinyl)-alpha-D-glucosamine + NADPH + H(+). It participates in cell wall biogenesis; peptidoglycan biosynthesis. Functionally, cell wall formation. This Clostridioides difficile (strain 630) (Peptoclostridium difficile) protein is UDP-N-acetylenolpyruvoylglucosamine reductase.